A 768-amino-acid polypeptide reads, in one-letter code: MSNLGKSTGSRKDTKMRIRAFPMTMDEKYVNSIWDLLKNAIQEIQRKNNSGLSFEELYRNAYTMVLHKHGEKLYTGLREVVTEHLINKVREDVLNSLNNNFLQTLNQAWNDHQTAMVMIRDILMYMDRVYVQQNNVENVYNLGLIIFRDQVVRYGCIRDHLRQTLLDMIARERKGEVVDRGAIRNACQMLMILGLEGRSVYEEDFEAPFLEMSAEFFQMESQKFLAENSASVYIKKVEARINEEIERVMHCLDKSTEEPIVKVVERELISKHMKTIVEMENSGLVHMLKNGKTEDLACMYKLFSRVPNGLKTMCECMSLYLREQGKALVSEEGEGKNPVDYIQGLLDLKSRFDRFLQESFSNDRLFKQTIAGDFEYFLNLNSRSPEYLSLFIDDKLKKGVKGLTEQEVESILDKAMVLFRFMQEKDVFERYYKQHLARRLLTNKSVSDDSEKNMISKLKTECGCQFTSKLEGMFRDMSISNTTMDEFRQHLQTTGVSLGGVDLTVRVLTTGYWPTQSATPKCNIPPAPRHAFEIFRRFYLAKHSGRQLTLQHHMGSADLNATFYGPVKKEDGSEVGVGGAQVTGSNTRKHILQVSTFQMTILMLFNNRDKYTFEEIQQETDIPERELVRALQSLACGKPTQRVLTKEPKSKEIESGHMFTVNDQFTSKLHRVKIQTVAAKQGESDPERKETRQKVDDDRKHEIEAAIVRIMKSRKKMQHNVLVAEVTQQLKARFLPSPVVIKKRIEGLIEREYLARTPEDRKVYTYVA.

Residues 677 to 698 (VAAKQGESDPERKETRQKVDDD) are disordered. Basic and acidic residues predominate over residues 682–698 (GESDPERKETRQKVDDD). The region spanning 698–760 (DRKHEIEAAI…REYLARTPED (63 aa)) is the Cullin neddylation domain. K712 is covalently cross-linked (Glycyl lysine isopeptide (Lys-Gly) (interchain with G-Cter in NEDD8)).

Belongs to the cullin family. In terms of assembly, component of multiple BCR (BTB-CUL3-RBX1) E3 ubiquitin-protein ligase complexes formed of cul3, rbx1 and a variable BTB domain-containing protein acting as both, adapter to cullin and substrate recognition subunit. Interacts with btbd6. Neddylated. Attachment of NEDD8 is required for the E3 ubiquitin-protein ligase activity of the SCF-like complex.

It is found in the nucleus. Its pathway is protein modification; protein ubiquitination. In terms of biological role, probable core component of cullin-based SCF-like E3 ubiquitin-protein ligase complexes which mediate the ubiquitination and subsequent proteasomal degradation of target proteins. The E3 ubiquitin-protein ligase activity of the complex is dependent on the neddylation of the cullin subunit. Involved in ER-Golgi transport by regulating the size of COPII coats, thereby playing a key role in collagen export, which is required for embryonic stem (ES) cells division. May play a role in the regulation of mittotic entry via ubiquitination of aurka. The protein is Cullin-3-A (cul3a) of Xenopus laevis (African clawed frog).